The following is a 212-amino-acid chain: Ribonuclease HII (212 aa).

The RNase H type-2 domain maps to 4–206 (EVQCGIDEAG…YKKIKEDVES (203 aa)). A divalent metal cation-binding residues include Asp-10, Glu-11, and Asp-103.

The protein belongs to the RNase HII family. Mn(2+) serves as cofactor. Requires Mg(2+) as cofactor.

It localises to the cytoplasm. The enzyme catalyses Endonucleolytic cleavage to 5'-phosphomonoester.. Its function is as follows. Endonuclease that specifically degrades the RNA of RNA-DNA hybrids. This chain is Ribonuclease HII, found in Thermoplasma volcanium (strain ATCC 51530 / DSM 4299 / JCM 9571 / NBRC 15438 / GSS1).